Consider the following 140-residue polypeptide: Probable disulfide formation protein C 2 (140 aa).

The helical transmembrane segment at 6–25 (KYHIAIAWTIATSAMLISLI) threads the bilayer. A disulfide bridge connects residues C35 and C38. 2 helical membrane-spanning segments follow: residues 40-59 (YQRMAMYPLVLILGIGMYRK) and 66-83 (YAFPFACIGLIISVYQIT). A disulfide bridge links C95 with C101. The helical transmembrane segment at 110-134 (GFISIPMLSFVGFLAIIILLYINQI) threads the bilayer.

The protein belongs to the DsbB family. BdbC subfamily.

The protein resides in the cell membrane. In terms of biological role, required for disulfide bond formation in some proteins. The protein is Probable disulfide formation protein C 2 (bdbC2) of Bacillus anthracis.